The chain runs to 450 residues: SAGA complex/transcription factor TFIID complex subunit Taf12 (450 aa).

Polar residues-rich tracts occupy residues 1 to 10 (MNGQHSSPGT), 19 to 29 (PVNQAQFSQQR), and 190 to 212 (QNRQASSANGNNTGTSTPVNAST). Disordered stretches follow at residues 1-29 (MNGQHSSPGTPVQRPSAGPVNQAQFSQQR) and 190-281 (QNRQ…VEKS). Residues 217-236 (STASTPQLQQTQAQANAPQQ) show a composition bias toward low complexity. Composition is skewed to polar residues over residues 237 to 246 (RINPETSSVP) and 255 to 281 (ANVSNESTELATSATQQSGLANNVEKS). Ser297 is subject to Phosphoserine. The Histone-fold domain occupies 338–413 (NGNRLLSKRK…HLERNWNIRL (76 aa)). A disordered region spans residues 426 to 450 (RKTGPTPSYQQKQNAIGTAKSLNKD). The span at 430–441 (PTPSYQQKQNAI) shows a compositional bias: polar residues.

It belongs to the TAF12 family. In terms of assembly, component of the 1.8 MDa SAGA (Spt-Ada-Gcn5 acetyltransferase) complex, which is composed of 19 subunits tra1, spt7, taf5, ngg1/ada3, sgf73, spt20, spt8, taf12, taf6, hfi1/ada1, ubp8, gcn5, ada2, spt3, sgf29, taf10, taf9, sgf11 and sus1. The SAGA complex is composed of 4 modules, namely the HAT (histone acetyltransferase) module (gcn5, ada2, ngg1/ada3 and sgf29), the DUB (deubiquitinating) module (ubp8, sgf11, sgf73 and sus1), the core or TAF (TBP-associated factor) module (taf5, taf6, taf9, taf10 and taf12), and the Tra1 or SPT (Suppressor of Ty) module (tra1, hfi1/ada1, spt3, spt7, spt8 and spt20). The Tra1/SPT module binds activators, the core module recruits TBP (TATA-binding protein), the HAT module contains the histone H3 acetyltransferase gcn5, and the DUB module comprises the histone H2B deubiquitinase ubp8. Component of the 1.2 MDa TFIID complex, which is composed of TATA-binding protein (TBP) and the 14 TBP-associated factors (TAFs). It comprises 1 copy of each taf1, taf2, taf3, taf7, taf8, taf11, taf13, 2 copies of each taf4, taf5, taf6, taf9, taf10, taf12, and 3 copies of taf14. In TFIID, taf12 heterodimerizes with taf4, forming ultimately an octamer consisting of a taf6-taf9 heterotetramer core flanked by taf4-taf12 dimers on either side, similar to the histone H2A-H2B-H3-H4 octamer.

It localises to the nucleus. Functions as a component of both the DNA-binding general transcription initiation factor complex TFIID and the transcription coactivator SAGA complex. Binding of TFIID to a promoter (with or without TATA element) is the initial step in pre-initiation complex (PIC) formation. TFIID plays a key role in the regulation of gene expression by RNA polymerase II through different activities such as transcription activator interaction, core promoter recognition and selectivity, TFIIA and TFIIB interaction, chromatin modification (histone acetylation by TAF1), facilitation of DNA opening and initiation of transcription. SAGA acts as a general cofactor required for essentially all RNA polymerase II transcription. At the promoters, SAGA is required for transcription pre-initiation complex (PIC) recruitment. It influences RNA polymerase II transcriptional activity through different activities such as TBP interaction (via core/TAF module) and promoter selectivity, interaction with transcription activators (via Tra1/SPT module), and chromatin modification through histone acetylation (via HAT module) and deubiquitination (via DUB module). SAGA preferentially acetylates histones H3 (to form H3K9ac, H3K14ac, H3K18ac and H3K23ac) and H2B and deubiquitinates histone H2B. SAGA interacts with DNA via upstream activating sequences (UASs). This chain is SAGA complex/transcription factor TFIID complex subunit Taf12, found in Schizosaccharomyces pombe (strain 972 / ATCC 24843) (Fission yeast).